The primary structure comprises 644 residues: Exoribonuclease 2 (644 aa).

The RNB domain maps to 189–516; it reads RQDLTALNFV…NHRLLKAVIK (328 aa). Residues 561 to 643 enclose the S1 motif domain; that stretch reads NTRFAAEIID…ETRSIIARPA (83 aa).

The protein belongs to the RNR ribonuclease family. RNase II subfamily.

It localises to the cytoplasm. The catalysed reaction is Exonucleolytic cleavage in the 3'- to 5'-direction to yield nucleoside 5'-phosphates.. Its function is as follows. Involved in mRNA degradation. Hydrolyzes single-stranded polyribonucleotides processively in the 3' to 5' direction. In Salmonella choleraesuis (strain SC-B67), this protein is Exoribonuclease 2.